The primary structure comprises 252 residues: MKILKYEDEKYEVLVQNNVFIKDKKSGEYYKNSLNSLSDKQLLRFKMYKEKVSPKFFYLFLSFTALMFILNYIHLIKLQNGLSSVFYGWKMWIIIVIYFIMNIVLHELGHIYSLKFFGKNFDKVGFKLNFYVFPAFYVQLNETYMLSRNEKIIVHLFGLFINYLLINTLELINQFTFSSEALTMAFMLFSSTLLWNLIPILNSDGYKILLAFLSLDEYSRFKTNHWLVLTIQIIGIGLAVNSVVHWILYIVN.

2 consecutive transmembrane segments (helical) span residues 56 to 76 (FFYLFLSFTALMFILNYIHLI) and 85 to 105 (VFYGWKMWIIIVIYFIMNIVL). Zn(2+) is bound at residue histidine 106. Glutamate 107 is a catalytic residue. A Zn(2+)-binding site is contributed by histidine 110. 3 consecutive transmembrane segments (helical) span residues 152-172 (IIVHLFGLFINYLLINTLELI), 181-201 (ALTMAFMLFSSTLLWNLIPIL), and 231-251 (IQIIGIGLAVNSVVHWILYIV).

The protein belongs to the peptidase M50B family. It depends on Zn(2+) as a cofactor.

The protein localises to the cell membrane. Required for production of the modified peptide YydF. May process the precursor form of YydF to release the active peptide (Potential). The chain is Putative peptide zinc metalloprotease protein YydH (yydH) from Bacillus subtilis (strain 168).